The primary structure comprises 163 residues: Ribosome maturation factor RimP (163 aa).

Belongs to the RimP family.

It is found in the cytoplasm. Functionally, required for maturation of 30S ribosomal subunits. This is Ribosome maturation factor RimP from Streptococcus thermophilus (strain CNRZ 1066).